A 353-amino-acid polypeptide reads, in one-letter code: Aliphatic aldoxime dehydratase (353 aa).

Position 219 (Ser-219) interacts with an aliphatic aldoxime. Residue His-299 coordinates heme b. His-320 provides a ligand contact to an aliphatic aldoxime. His-320 is a catalytic residue.

This sequence belongs to the heme-containing dehydratase family. As to quaternary structure, homodimer. Requires heme b as cofactor.

It catalyses the reaction an aliphatic aldoxime = a nitrile + H2O. Its activity is regulated as follows. Active when the heme iron is in the ferrous state. The activity is enhanced by reducing agents, such as Na(2)S, Na(2)S(2)(O4), 2-mercaptoethanol, and L-cysteine and supplementary additions of electron acceptors such as flavins, sulfite ion, and vitamin K3. The effect of various chemicals on the enzyme activity is different in the presence and absence of the reducing reagent, Na(2)S, which acts not only as a reductant but also changes the substrate specificity of the enzyme. Catalyzes the dehydration of aldoximes to their corresponding nitrile. Is active toward various arylalkyl- and alkyl-aldoximes, and to a lesser extent toward aryl-aldoximes. In Rhodococcus erythropolis (Arthrobacter picolinophilus), this protein is Aliphatic aldoxime dehydratase.